Here is a 209-residue protein sequence, read N- to C-terminus: Redox-sensing transcriptional repressor Rex (209 aa).

The H-T-H motif DNA-binding region spans 16-55; that stretch reads LYYRFIQNLSLSGKQRVSSAELSEAVKVDSATIRRDFSYF. 90-95 contributes to the NAD(+) binding site; that stretch reads GVGNLG.

This sequence belongs to the transcriptional regulatory Rex family. As to quaternary structure, homodimer.

It localises to the cytoplasm. Functionally, modulates transcription in response to changes in cellular NADH/NAD(+) redox state. This chain is Redox-sensing transcriptional repressor Rex, found in Bacillus mycoides (strain KBAB4) (Bacillus weihenstephanensis).